Reading from the N-terminus, the 279-residue chain is NADPH-dependent 7-cyano-7-deazaguanine reductase (279 aa).

A substrate-binding site is contributed by 86-88; sequence IES. 88-89 contacts NADPH; sequence SK. Catalysis depends on cysteine 187, which acts as the Thioimide intermediate. Aspartate 194 acts as the Proton donor in catalysis. 226–227 is a binding site for substrate; it reads HE. 255 to 256 lines the NADPH pocket; the sequence is RG.

It belongs to the GTP cyclohydrolase I family. QueF type 2 subfamily. As to quaternary structure, homodimer.

The protein localises to the cytoplasm. It catalyses the reaction 7-aminomethyl-7-carbaguanine + 2 NADP(+) = 7-cyano-7-deazaguanine + 2 NADPH + 3 H(+). The protein operates within tRNA modification; tRNA-queuosine biosynthesis. Catalyzes the NADPH-dependent reduction of 7-cyano-7-deazaguanine (preQ0) to 7-aminomethyl-7-deazaguanine (preQ1). This chain is NADPH-dependent 7-cyano-7-deazaguanine reductase, found in Actinobacillus pleuropneumoniae serotype 3 (strain JL03).